A 355-amino-acid chain; its full sequence is Mitogen-activated protein kinase (355 aa).

A Protein kinase domain is found at 23–311 (YDIQDVVGEG…VEEALKHPYL (289 aa)). Residues 29 to 37 (VGEGAYGVV) and K52 contribute to the ATP site. D147 (proton acceptor) is an active-site residue. T183 carries the phosphothreonine modification. Positions 183 to 185 (TEY) match the TXY motif. Position 185 is a phosphotyrosine (Y185).

The protein belongs to the protein kinase superfamily. CMGC Ser/Thr protein kinase family. MAP kinase subfamily. In terms of processing, dually phosphorylated on Thr-183 and Tyr-185, which activates the enzyme.

The protein resides in the nucleus. The enzyme catalyses L-seryl-[protein] + ATP = O-phospho-L-seryl-[protein] + ADP + H(+). It carries out the reaction L-threonyl-[protein] + ATP = O-phospho-L-threonyl-[protein] + ADP + H(+). With respect to regulation, activated by tyrosine and threonine phosphorylation. Functionally, responds to activation by environmental stress by phosphorylating downstream targets. This chain is Mitogen-activated protein kinase (MAPK), found in Fusarium vanettenii (Neocosmospora pisi).